Reading from the N-terminus, the 413-residue chain is Na(+)/H(+) antiporter NhaA (413 aa).

Helical transmembrane passes span 15 to 35, 57 to 77, 93 to 113, 123 to 143, 152 to 172, 175 to 195, 211 to 231, 261 to 281, 295 to 315, 333 to 353, and 364 to 384; these read LESGAAGGLLLMACAVLALFV, LLHWINDGLMAIFFLFVGLEI, ALPCIAAAGGVVVPGLIYASL, GWAIPTATDIAFALGVLSLLG, IFLATLAIVDDLVAVLIIAVF, AELNTAALMGAALVTLVLLGF, VALWWLVLLSGVHATIAGVVL, WVAFLVVPIFGFANAGLSFAG, VALGLFFGKQIGVFGAAWLAI, GVSLLCGIGFTMSLFIGLLAF, and VGVLVGSLSSALIGATLLSLT.

It belongs to the NhaA Na(+)/H(+) (TC 2.A.33) antiporter family.

Its subcellular location is the cell inner membrane. The enzyme catalyses Na(+)(in) + 2 H(+)(out) = Na(+)(out) + 2 H(+)(in). In terms of biological role, na(+)/H(+) antiporter that extrudes sodium in exchange for external protons. The protein is Na(+)/H(+) antiporter NhaA of Caulobacter vibrioides (strain ATCC 19089 / CIP 103742 / CB 15) (Caulobacter crescentus).